Here is a 737-residue protein sequence, read N- to C-terminus: Translation initiation factor IF-2 (737 aa).

Residues 69–80 (EKKEEKPIRKIM) show a composition bias toward basic and acidic residues. Positions 69-130 (EKKEEKPIRK…HKNKGKKKKG (62 aa)) are disordered. 2 stretches are compositionally biased toward basic residues: residues 95 to 108 (NNKK…KNKK) and 121 to 130 (HKNKGKKKKG). Positions 237-404 (ERPPVITIMG…TILITAEILE (168 aa)) constitute a tr-type G domain. Residues 246–253 (GHVDHGKT) form a G1 region. A GTP-binding site is contributed by 246–253 (GHVDHGKT). Residues 271-275 (GITQK) form a G2 region. A G3 region spans residues 292–295 (DTPG). Residues 292–296 (DTPGH) and 346–349 (NKID) contribute to the GTP site. The G4 stretch occupies residues 346 to 349 (NKID). Residues 382-384 (SAK) form a G5 region.

The protein belongs to the TRAFAC class translation factor GTPase superfamily. Classic translation factor GTPase family. IF-2 subfamily.

It localises to the cytoplasm. In terms of biological role, one of the essential components for the initiation of protein synthesis. Protects formylmethionyl-tRNA from spontaneous hydrolysis and promotes its binding to the 30S ribosomal subunits. Also involved in the hydrolysis of GTP during the formation of the 70S ribosomal complex. In Fusobacterium nucleatum subsp. nucleatum (strain ATCC 25586 / DSM 15643 / BCRC 10681 / CIP 101130 / JCM 8532 / KCTC 2640 / LMG 13131 / VPI 4355), this protein is Translation initiation factor IF-2.